The following is a 411-amino-acid chain: Glutamyl-tRNA reductase (411 aa).

Residues Thr-48 to Arg-51, Ser-106, Glu-111 to Gln-113, and Gln-117 contribute to the substrate site. Cys-49 (nucleophile) is an active-site residue. Gly-186 to Gly-191 contacts NADP(+).

This sequence belongs to the glutamyl-tRNA reductase family. Homodimer.

It catalyses the reaction (S)-4-amino-5-oxopentanoate + tRNA(Glu) + NADP(+) = L-glutamyl-tRNA(Glu) + NADPH + H(+). The protein operates within porphyrin-containing compound metabolism; protoporphyrin-IX biosynthesis; 5-aminolevulinate from L-glutamyl-tRNA(Glu): step 1/2. Catalyzes the NADPH-dependent reduction of glutamyl-tRNA(Glu) to glutamate 1-semialdehyde (GSA). This chain is Glutamyl-tRNA reductase, found in Clostridium novyi (strain NT).